The primary structure comprises 310 residues: p-hydroxybenzoic acid efflux pump subunit AaeA (310 aa).

The chain crosses the membrane as a helical span at residues 12-32 (AITVVLVILAFIAIFNAWVYY).

It belongs to the membrane fusion protein (MFP) (TC 8.A.1) family.

Its subcellular location is the cell inner membrane. In terms of biological role, forms an efflux pump with AaeB. In Escherichia coli O127:H6 (strain E2348/69 / EPEC), this protein is p-hydroxybenzoic acid efflux pump subunit AaeA.